The chain runs to 732 residues: Polyribonucleotide nucleotidyltransferase (732 aa).

Aspartate 489 and aspartate 495 together coordinate Mg(2+). Positions 556-615 constitute a KH domain; sequence PKIDTIQIDVDKIKIVIGKGGETIDKIIAETGVKIDIDEEGLVQIFSSDQAAIDRTKEII. An S1 motif domain is found at 625-693; sequence GEVYHAKVVR…DKGRVDASMK (69 aa). The segment at 691 to 732 is disordered; it reads SMKALIPRPPKPEKKEEKASEAKEASNDQASKSQSETASEEK. The segment covering 700–716 has biased composition (basic and acidic residues); sequence PKPEKKEEKASEAKEAS. A compositionally biased stretch (polar residues) spans 717 to 732; it reads NDQASKSQSETASEEK.

This sequence belongs to the polyribonucleotide nucleotidyltransferase family. Mg(2+) is required as a cofactor.

The protein resides in the cytoplasm. It carries out the reaction RNA(n+1) + phosphate = RNA(n) + a ribonucleoside 5'-diphosphate. In terms of biological role, involved in mRNA degradation. Catalyzes the phosphorolysis of single-stranded polyribonucleotides processively in the 3'- to 5'-direction. This Streptococcus uberis (strain ATCC BAA-854 / 0140J) protein is Polyribonucleotide nucleotidyltransferase.